Reading from the N-terminus, the 455-residue chain is Glycylpeptide N-tetradecanoyltransferase (455 aa).

38 to 41 (HKFW) provides a ligand contact to tetradecanoyl-CoA. Residues 168-204 (INFLCVHKQLRSKRLTPVLIKEITRRVNKCDIWHALY) form a myristoyl CoA-binding region. The active-site Proton acceptor; via carboxylate is Leu-455.

This sequence belongs to the NMT family. In terms of assembly, monomer. Post-translationally, the N-terminus is blocked.

It is found in the cytoplasm. The catalysed reaction is N-terminal glycyl-[protein] + tetradecanoyl-CoA = N-tetradecanoylglycyl-[protein] + CoA + H(+). With respect to regulation, inhibited by diethylpyrocarbonate. Competitively inhibited by S-(2-oxo)pentadecyl-CoA, a non hydrolysable myristoyl-CoA analog, and by SC-58272, a peptidomimetic derived from the N-terminal sequence of a natural substrate. Adds a myristoyl group to the N-terminal glycine residue of certain cellular proteins. Substrate specificity requires an N-terminal glycine in the nascent polypeptide substrates. Uncharged amino acids are preferred at position 2 while neutral residues are favored at positions 3 and 4. Ser is present at position 5 in almost all known N-myristoyl proteins and Lys is commonly encountered at postion 6. This Saccharomyces cerevisiae (strain ATCC 204508 / S288c) (Baker's yeast) protein is Glycylpeptide N-tetradecanoyltransferase (NMT1).